Consider the following 179-residue polypeptide: MAKLHDKYQETVVAELAKKFGYSSVMQVPRIEKITLNMGVGEAVADKKVMEHALRDMTAIAGQKPIVTVARKSVAGFKIREGYPIGCKVTLRGERMWEFLERLVDIAIPRIRDFRGLSAKAFDGRGNYAMGVREQIIFPEIDYDKIDKIRGMDIVITTSAKTDEEGHALLTAFNFPFKK.

The protein belongs to the universal ribosomal protein uL5 family. In terms of assembly, part of the 50S ribosomal subunit; part of the 5S rRNA/L5/L18/L25 subcomplex. Contacts the 5S rRNA and the P site tRNA. Forms a bridge to the 30S subunit in the 70S ribosome.

Its function is as follows. This is one of the proteins that bind and probably mediate the attachment of the 5S RNA into the large ribosomal subunit, where it forms part of the central protuberance. In the 70S ribosome it contacts protein S13 of the 30S subunit (bridge B1b), connecting the 2 subunits; this bridge is implicated in subunit movement. Contacts the P site tRNA; the 5S rRNA and some of its associated proteins might help stabilize positioning of ribosome-bound tRNAs. The polypeptide is Large ribosomal subunit protein uL5 (Shewanella denitrificans (strain OS217 / ATCC BAA-1090 / DSM 15013)).